A 21-amino-acid chain; its full sequence is FINTIRLLINKYREWKNKKDS.

Ser-21 is modified (serine amide).

As to expression, expressed by the venom gland.

Its subcellular location is the secreted. In Cupiennius salei (American wandering spider), this protein is Cupiennin-6c.